The chain runs to 403 residues: tRNA(Met) cytidine acetate ligase (403 aa).

ATP contacts are provided by residues 7–20 (VVEYNPFHNGHAYH), Gly-101, Asn-164, and 189–190 (RI).

Belongs to the TmcAL family.

Its subcellular location is the cytoplasm. It carries out the reaction cytidine(34) in elongator tRNA(Met) + acetate + ATP = N(4)-acetylcytidine(34) in elongator tRNA(Met) + AMP + diphosphate. In terms of biological role, catalyzes the formation of N(4)-acetylcytidine (ac(4)C) at the wobble position of elongator tRNA(Met), using acetate and ATP as substrates. First activates an acetate ion to form acetyladenylate (Ac-AMP) and then transfers the acetyl group to tRNA to form ac(4)C34. In Lysinibacillus sphaericus (strain C3-41), this protein is tRNA(Met) cytidine acetate ligase.